A 458-amino-acid polypeptide reads, in one-letter code: Argininosuccinate lyase (458 aa).

This sequence belongs to the lyase 1 family. Argininosuccinate lyase subfamily.

It localises to the cytoplasm. It carries out the reaction 2-(N(omega)-L-arginino)succinate = fumarate + L-arginine. It functions in the pathway amino-acid biosynthesis; L-arginine biosynthesis; L-arginine from L-ornithine and carbamoyl phosphate: step 3/3. This is Argininosuccinate lyase from Neisseria meningitidis serogroup A / serotype 4A (strain DSM 15465 / Z2491).